A 226-amino-acid chain; its full sequence is Uracil phosphoribosyltransferase (226 aa).

36-40 (KGLVK) is a GTP binding site. Residues R86, R111, and 145-153 (DPMLATGST) contribute to the 5-phospho-alpha-D-ribose 1-diphosphate site. Residues I211 and 216–218 (GDA) each bind uracil. D217 contacts 5-phospho-alpha-D-ribose 1-diphosphate.

Belongs to the UPRTase family. Requires Mg(2+) as cofactor.

It catalyses the reaction UMP + diphosphate = 5-phospho-alpha-D-ribose 1-diphosphate + uracil. Its pathway is pyrimidine metabolism; UMP biosynthesis via salvage pathway; UMP from uracil: step 1/1. With respect to regulation, allosterically activated by GTP. In terms of biological role, catalyzes the conversion of uracil and 5-phospho-alpha-D-ribose 1-diphosphate (PRPP) to UMP and diphosphate. This is Uracil phosphoribosyltransferase from Haloquadratum walsbyi (strain DSM 16790 / HBSQ001).